The following is a 507-amino-acid chain: ATP synthase subunit alpha, chloroplastic (507 aa).

Residue 170 to 177 (GDRQTGKT) coordinates ATP. T257 carries the phosphothreonine modification.

The protein belongs to the ATPase alpha/beta chains family. In terms of assembly, F-type ATPases have 2 components, CF(1) - the catalytic core - and CF(0) - the membrane proton channel. CF(1) has five subunits: alpha(3), beta(3), gamma(1), delta(1), epsilon(1). CF(0) has four main subunits: a, b, b' and c.

It localises to the plastid. The protein resides in the chloroplast thylakoid membrane. The enzyme catalyses ATP + H2O + 4 H(+)(in) = ADP + phosphate + 5 H(+)(out). Functionally, produces ATP from ADP in the presence of a proton gradient across the membrane. The alpha chain is a regulatory subunit. The sequence is that of ATP synthase subunit alpha, chloroplastic from Aethionema grandiflorum (Persian stone-cress).